A 368-amino-acid polypeptide reads, in one-letter code: Forkhead box protein I2 (368 aa).

The disordered stretch occupies residues 33 to 54; sequence QNQQLPQRPAAPPALGYGRNEY. The fork-head DNA-binding region spans 124–218; sequence RPPYSYSSLI…DNGNFRRKRK (95 aa). The tract at residues 243 to 272 is disordered; the sequence is SLGSDSPRGASALEQSSYGTPESKSRPAGG. The segment covering 255-264 has biased composition (polar residues); that stretch reads LEQSSYGTPE.

The protein localises to the nucleus. In terms of biological role, possible transcriptional activator. The chain is Forkhead box protein I2 from Xenopus tropicalis (Western clawed frog).